Reading from the N-terminus, the 462-residue chain is Phosphoglucosamine mutase (462 aa).

Ser-112 (phosphoserine intermediate) is an active-site residue. Mg(2+) contacts are provided by Ser-112, Asp-250, Asp-252, and Asp-254. The residue at position 112 (Ser-112) is a Phosphoserine.

Belongs to the phosphohexose mutase family. The cofactor is Mg(2+). Activated by phosphorylation.

It catalyses the reaction alpha-D-glucosamine 1-phosphate = D-glucosamine 6-phosphate. Catalyzes the conversion of glucosamine-6-phosphate to glucosamine-1-phosphate. This is Phosphoglucosamine mutase from Parasynechococcus marenigrum (strain WH8102).